The following is a 101-amino-acid chain: Large ribosomal subunit protein uL24 (101 aa).

Belongs to the universal ribosomal protein uL24 family. In terms of assembly, part of the 50S ribosomal subunit.

Its function is as follows. One of two assembly initiator proteins, it binds directly to the 5'-end of the 23S rRNA, where it nucleates assembly of the 50S subunit. One of the proteins that surrounds the polypeptide exit tunnel on the outside of the subunit. The polypeptide is Large ribosomal subunit protein uL24 (Ligilactobacillus salivarius (strain UCC118) (Lactobacillus salivarius)).